The primary structure comprises 92 residues: Small ribosomal subunit protein uS19c (92 aa).

Belongs to the universal ribosomal protein uS19 family.

Its subcellular location is the plastid. It is found in the chloroplast. In terms of biological role, protein S19 forms a complex with S13 that binds strongly to the 16S ribosomal RNA. The polypeptide is Small ribosomal subunit protein uS19c (Oltmannsiellopsis viridis (Marine flagellate)).